The chain runs to 223 residues: Glutathione S-transferase 4 (223 aa).

At Ala-2 the chain carries Blocked amino end (Ala). Residues Pro-4–Leu-85 form the GST N-terminal domain. Residues Ser-14, His-43–Arg-44, Lys-56–Val-57, and Glu-69–Ser-70 contribute to the glutathione site. The GST C-terminal domain maps to Arg-90 to Glu-223.

Belongs to the GST superfamily. Phi family. In terms of assembly, homodimer or heterodimer of GST-I and GST-IV (=GST-II). As to expression, seedling roots.

The catalysed reaction is RX + glutathione = an S-substituted glutathione + a halide anion + H(+). Its function is as follows. Conjugation of reduced glutathione to a wide number of exogenous and endogenous hydrophobic electrophiles. Involved in the detoxification of certain herbicides. Most active with substrates possessing a chloroacetamide structure. Trans-cinnamic acid and 1-chloro-2,4-dinitrobenzene are not effective substrates. May play an important role in the benoxacor-mediated protection of maize from metolachlor injury. This Zea mays (Maize) protein is Glutathione S-transferase 4 (GST4).